The primary structure comprises 436 residues: UPF0597 protein YhaM (436 aa).

This sequence belongs to the UPF0597 family.

The sequence is that of UPF0597 protein YhaM from Escherichia coli O127:H6 (strain E2348/69 / EPEC).